We begin with the raw amino-acid sequence, 376 residues long: Ribosomal RNA large subunit methyltransferase G (376 aa).

This sequence belongs to the methyltransferase superfamily. RlmG family.

The protein resides in the cytoplasm. The catalysed reaction is guanosine(1835) in 23S rRNA + S-adenosyl-L-methionine = N(2)-methylguanosine(1835) in 23S rRNA + S-adenosyl-L-homocysteine + H(+). Functionally, specifically methylates the guanine in position 1835 (m2G1835) of 23S rRNA. The sequence is that of Ribosomal RNA large subunit methyltransferase G from Klebsiella pneumoniae (strain 342).